A 244-amino-acid chain; its full sequence is Protein crossbronx (244 aa).

One can recognise a UBC core domain in the interval Gln-20–Asp-176.

This sequence belongs to the ubiquitin-conjugating enzyme family. FTS subfamily.

This chain is Protein crossbronx (cbx), found in Drosophila yakuba (Fruit fly).